We begin with the raw amino-acid sequence, 941 residues long: Coiled-coil and C2 domain-containing protein 1A (941 aa).

Thr91 is subject to Phosphothreonine. 2 disordered regions span residues 183-248 (TINE…PCSP) and 301-336 (SRLP…VPQP). The segment covering 228 to 239 (APSTTAQTSAKP) has biased composition (polar residues). At Ser247 the chain carries Phosphoserine. The span at 303-318 (LPPPPDQLSPEPPLPA) shows a compositional bias: pro residues. Residues 338–384 (KNLLEALEQRMERYHVAAAQAKAKGDQRKARMHERIVKQYQDAIRAH) adopt a coiled-coil conformation. The segment at 428–482 (ANHEEGSDEEEEETPKKNTPAASTAQPKASPSRAPPSGPAPAGKAASKGTSTRAQ) is disordered. Ser434 carries the phosphoserine modification. Residues 467–476 (APAGKAASKG) show a composition bias toward low complexity. Residues 475-508 (KGTSTRAQQQLAFLEGRKKQLLQAALRAKQKNDV) adopt a coiled-coil conformation. Positions 628–762 (RFEQRTFSVI…ETACEVHEIL (135 aa)) constitute a C2 domain.

Belongs to the CC2D1 family. In terms of tissue distribution, strongly expressed in several brain areas including frontal cortex, cortex, mesencephalon, hippocampus, midbrain and hypothalamus. Also expressed in testis and at low levels in pituitary, liver and kidney. In brain the highest levels are detected in hippocampal pyramidal cells and raphe nuclei.

The protein resides in the cytoplasm. It localises to the nucleus. Its subcellular location is the cytoskeleton. It is found in the microtubule organizing center. The protein localises to the centrosome. Its function is as follows. Transcription factor that binds specifically to the DRE (dual repressor element) and represses 5-HT1A gene transcription though this element. Mediates HDAC-independent repression of HTR1A promoter. CAMK2G inhibits CC2D1a-induced repression of the HTR1A. May play a role in the altered regulation of 5-HT1A receptors associated with anxiety and major depression. Performs essential function in controlling functional maturation of synapses. The protein is Coiled-coil and C2 domain-containing protein 1A (Cc2d1a) of Rattus norvegicus (Rat).